The primary structure comprises 136 residues: Large ribosomal subunit protein uL16 (136 aa).

This sequence belongs to the universal ribosomal protein uL16 family. As to quaternary structure, part of the 50S ribosomal subunit.

Binds 23S rRNA and is also seen to make contacts with the A and possibly P site tRNAs. This is Large ribosomal subunit protein uL16 from Buchnera aphidicola subsp. Cinara cedri (strain Cc).